A 440-amino-acid polypeptide reads, in one-letter code: Methionine aminopeptidase 2-2 (440 aa).

A disordered region spans residues 1-102; it reads MAAQVPTEAL…KGQEEEYRDE (102 aa). Acidic residues predominate over residues 36–46; that stretch reads DSDDSDEEGEE. The span at 56–70 shows a compositional bias: basic residues; it reads AKKKKKNKKKKKKKS. Position 194 (His-194) interacts with substrate. A divalent metal cation is bound by residues Asp-214, Asp-225, and His-294. His-302 serves as a coordination point for substrate. Residues Glu-327 and Glu-421 each coordinate a divalent metal cation.

Belongs to the peptidase M24A family. Methionine aminopeptidase eukaryotic type 2 subfamily. Co(2+) is required as a cofactor. Requires Zn(2+) as cofactor. It depends on Mn(2+) as a cofactor. The cofactor is Fe(2+).

The protein resides in the cytoplasm. It catalyses the reaction Release of N-terminal amino acids, preferentially methionine, from peptides and arylamides.. Functionally, cotranslationally removes the N-terminal methionine from nascent proteins. The N-terminal methionine is often cleaved when the second residue in the primary sequence is small and uncharged (Met-Ala-, Cys, Gly, Pro, Ser, Thr, or Val). This chain is Methionine aminopeptidase 2-2, found in Colletotrichum graminicola (strain M1.001 / M2 / FGSC 10212) (Maize anthracnose fungus).